A 1322-amino-acid chain; its full sequence is Serine/threonine-protein phosphatase UIS2 (1322 aa).

Positions 1-22 are cleaved as a signal peptide; the sequence is MNISKFFLIFIPLVLFKYPANN. The interval 1 to 535 is interaction with phosphorylated eIF2alpha; it reads MNISKFFLIF…NELKSTSNAM (535 aa). Composition is skewed to basic and acidic residues over residues 267-279 and 288-326; these read EKSAEKYEDKELN and NSKKEQTGNDNVSETKMHKEESSDSSNKTDESNVCKSEN. 4 disordered regions span residues 267 to 326, 613 to 646, 1066 to 1087, and 1170 to 1196; these read EKSA…KSEN, NTNTDDKNQHNDISTTPINNYTDGNEGNNNSENN, NETPHNSNEILNTNENESIQPN, and EVPDESKEDDNTNSQPEDTIDQENKDD. Positions 631-646 are enriched in low complexity; sequence NNYTDGNEGNNNSENN.

Requires Mn(2+) as cofactor.

The enzyme catalyses O-phospho-L-seryl-[protein] + H2O = L-seryl-[protein] + phosphate. Protein phosphatase which dephosphorylates 'Ser-59' of translation factor eIF2alpha during the liver stage, thus enabling protein translation. This chain is Serine/threonine-protein phosphatase UIS2, found in Plasmodium berghei (strain Anka).